A 358-amino-acid polypeptide reads, in one-letter code: Molybdenum import ATP-binding protein ModC (358 aa).

Residues 2–234 (NDDISASFFS…PDLPLAHLEE (233 aa)) enclose the ABC transporter domain. ATP is bound at residue 34–41 (GRSGSGKT). Positions 293 to 358 (LSSISNCIPV…AQVKSVALID (66 aa)) constitute a Mop domain.

This sequence belongs to the ABC transporter superfamily. Molybdate importer (TC 3.A.1.8) family. In terms of assembly, the complex is composed of two ATP-binding proteins (ModC), two transmembrane proteins (ModB) and a solute-binding protein (ModA).

Its subcellular location is the cell inner membrane. The catalysed reaction is molybdate(out) + ATP + H2O = molybdate(in) + ADP + phosphate + H(+). Its function is as follows. Part of the ABC transporter complex ModABC involved in molybdenum import. Responsible for energy coupling to the transport system. This is Molybdenum import ATP-binding protein ModC from Hahella chejuensis (strain KCTC 2396).